Reading from the N-terminus, the 640-residue chain is MVLFLIIAAIIIGLLLWKWLDVRSTDELTSMVKLLGSGNGQHVLSNAFQVDEKSKRHGGELVASVLKAHDVEEIFVLCGGHISPILVAAEKLGIKIVDTRHEVTAVFAADAVARLRQSIGVAAVTAGPGLTNTITAVKNAQMAESPLLLIGGAAPTLLKGRGALQDIDQMVLFRPLCKYVARVERLRDIVPTVREAIKAAKSGCPGPVFVEFPVDVLYPYELVVKEIGFNPNAKGFIQRALNFYLRCHVSRQFGNAWAPQTITPLPTNIPMPKSEKIQEIVQLVKSAKRPVLLIGSQATLPPVKPADLVKAVEALGCPVFLGGMARGLLGKDHPLQMRQVRRDALKDADLTILAGTVCDFRLSYGRTLSKKSKIVALNRNSSQLTKNEKAFWNSDVSVQADVATSLVQVANALGANHTTTPTEWVKSLREKDDEKESANAKKMEQKLTNGFLNPLNFLRTLDQSLPDDAILVADGGDFVGSAAYIVRPRGPLQWLDPGAFGTLGVGGGFALGAKTVYPKRPVYIIWGDGSCGYSLMEYDTFARHKLPVIGIVGNDACWTQIAREQVPMFQSSVAVDLARTRYDNVAKSLGSWGETIDESNADSARKILDEALAVCRSGEQSALVNVLIGKTDFREGSISV.

The chain crosses the membrane as a helical span at residues 2-22 (VLFLIIAAIIIGLLLWKWLDV). Glu102 serves as a coordination point for thiamine diphosphate. Residues 477–557 (DFVGSAAYIV…VIGIVGNDAC (81 aa)) are thiamine pyrophosphate binding. Asp528 and Asn554 together coordinate Mg(2+).

Belongs to the TPP enzyme family. Requires Mg(2+) as cofactor. The cofactor is thiamine diphosphate.

It is found in the endoplasmic reticulum membrane. The enzyme catalyses 2-hydroxyoctadecanoyl-CoA = heptadecanal + formyl-CoA. The catalysed reaction is (2R)-hydroxyhexadecanoyl-CoA = pentadecanal + formyl-CoA. In terms of biological role, endoplasmic reticulum 2-OH acyl-CoA lyase involved in the cleavage (C1 removal) reaction in the fatty acid alpha-oxydation in a thiamine pyrophosphate (TPP)-dependent manner. In Caenorhabditis elegans, this protein is 2-hydroxyacyl-CoA lyase 2.